Consider the following 366-residue polypeptide: Transcription factor MYB61 (366 aa).

HTH myb-type domains lie at 9 to 61 and 62 to 116; these read KQKL…INYL and RPDL…KKKL. 2 consecutive DNA-binding regions (H-T-H motif) follow at residues 37–61 and 89–112; these read WSSVPKLAGLQRCGKSCRLRWINYL and WSQIASRLPGRTDNEIKNLWNSSI. The disordered stretch occupies residues 115 to 164; the sequence is KLKQRGIDPNTHKPISEVESFSDKDKPTTSNNKRSGNDHKSPSSSSATNQ. Residues 124–141 show a composition bias toward basic and acidic residues; it reads NTHKPISEVESFSDKDKP.

In terms of tissue distribution, expressed specifically in guard cells. Expressed in sink tissues, such as xylem, roots and developing seeds.

It is found in the nucleus. Functionally, transcription factor that coordinates a small network of downstream target genes required for several aspects of plant growth and development, such as xylem formation and xylem cell differentiation, and lateral root formation. Regulates a specific set of target genes by binding DNA to the AC cis-element 5'-ACCTAC-3'. Functions as a transcriptional regulator of stomatal closure. Plays a role the regulation of stomatal pore size independently of abscisic acid (ABA). Required for seed coat mucilage deposition during the development of the seed coat epidermis. Involved in the induction of trichome initiation and branching by positively regulating GL1 and GL2. Required for gibberellin (GA) biosynthesis and degradation by positively affecting the expression of the enzymes that convert GA9 into the bioactive GA4, as well as the enzymes involved in the degradation of GA4. The polypeptide is Transcription factor MYB61 (Arabidopsis thaliana (Mouse-ear cress)).